We begin with the raw amino-acid sequence, 130 residues long: Small ribosomal subunit protein uS9 (130 aa).

It belongs to the universal ribosomal protein uS9 family.

The protein is Small ribosomal subunit protein uS9 of Ectopseudomonas mendocina (strain ymp) (Pseudomonas mendocina).